The chain runs to 87 residues: MASKDFHIVAETGIHARPATLLVQTASKFASDITLDYKGKAVNLKSIMGVMSLGVGQGADVTISAEGADADDAIVAIAETMTKEGLA.

The 87-residue stretch at 1–87 folds into the HPr domain; that stretch reads MASKDFHIVA…AETMTKEGLA (87 aa). His-15 functions as the Pros-phosphohistidine intermediate in the catalytic mechanism. Ser-46 carries the phosphoserine; by HPrK/P modification.

The protein belongs to the HPr family.

The protein localises to the cytoplasm. Phosphorylation on Ser-46 inhibits the phosphoryl transfer from enzyme I to HPr. Its function is as follows. General (non sugar-specific) component of the phosphoenolpyruvate-dependent sugar phosphotransferase system (sugar PTS). This major carbohydrate active-transport system catalyzes the phosphorylation of incoming sugar substrates concomitantly with their translocation across the cell membrane. The phosphoryl group from phosphoenolpyruvate (PEP) is transferred to the phosphoryl carrier protein HPr by enzyme I. Phospho-HPr then transfers it to the PTS EIIA domain. P-Ser-HPr interacts with the catabolite control protein A (CcpA), forming a complex that binds to DNA at the catabolite response elements cre, operator sites preceding a large number of catabolite-regulated genes. Thus, P-Ser-HPr is a corepressor in carbon catabolite repression (CCR), a mechanism that allows bacteria to coordinate and optimize the utilization of available carbon sources. P-Ser-HPr also plays a role in inducer exclusion, in which it probably interacts with several non-PTS permeases and inhibits their transport activity. This Streptococcus salivarius protein is Phosphocarrier protein HPr (ptsH).